We begin with the raw amino-acid sequence, 307 residues long: Ribosomal RNA small subunit methyltransferase H (307 aa).

S-adenosyl-L-methionine is bound by residues glycine 34–histidine 36, aspartate 54, phenylalanine 79, aspartate 101, and glutamine 108.

The protein belongs to the methyltransferase superfamily. RsmH family.

The protein resides in the cytoplasm. The catalysed reaction is cytidine(1402) in 16S rRNA + S-adenosyl-L-methionine = N(4)-methylcytidine(1402) in 16S rRNA + S-adenosyl-L-homocysteine + H(+). Specifically methylates the N4 position of cytidine in position 1402 (C1402) of 16S rRNA. This Ruthia magnifica subsp. Calyptogena magnifica protein is Ribosomal RNA small subunit methyltransferase H.